Reading from the N-terminus, the 274-residue chain is Large ribosomal subunit protein uL2 (274 aa).

A disordered region spans residues 224–259; it reads AMNPVDHPHGGGEGRTSGGRHPVTPWGIPTKGYKTR.

The protein belongs to the universal ribosomal protein uL2 family. As to quaternary structure, part of the 50S ribosomal subunit. Forms a bridge to the 30S subunit in the 70S ribosome.

In terms of biological role, one of the primary rRNA binding proteins. Required for association of the 30S and 50S subunits to form the 70S ribosome, for tRNA binding and peptide bond formation. It has been suggested to have peptidyltransferase activity; this is somewhat controversial. Makes several contacts with the 16S rRNA in the 70S ribosome. This Geobacter sp. (strain M21) protein is Large ribosomal subunit protein uL2.